Reading from the N-terminus, the 2025-residue chain is MSNRPNNNPGGSLRRSQRNTAGAQPQDDSIGGRSCSSSSAVIVPQPEDPDRANTSERQKTGQVPKKDNSRGVKRSASPDYNRTNSPSSAKKPRAFQHIESFSETNKPHSKSKKRHLDQEQQLKSAQLPSTSKAHTRKSVAAGSSRNQKRKRTESSCVKSGSGSESTGAEERSAKPIKLASKSATSAKAGCSTITDSSSAASTSSSSSAIASASSTVPAGARVKQGKDQNKARRSRSASSPSPRRSSREKEQSKTGGSSKFDWAARFSPKVSLPKTKLSLPGSSKSETSKPGPSGLQAKLASLRKSTKKRSESPPAELPSLRRSTRQKTTGSCASTSRRGSGLGKRGAAEARRQEKMADPESNQETVNSSAARTDEAPQGAAASSSVAGAVGMTTSGESESDDSEMGRLQALLEARGLPPHLFGPLGPRMSQLFHRTIGSGASSKAQQLLQGLQASDESQQLQAVIEMCQLLVMGNEETLGGFPVKSVVPALITLLQMEHNFDIMNHACRALTYMMEALPRSSAVVVDAIPVFLEKLQVIQCIDVAEQALTALEMLSRRHSKAILQAGGLADCLLYLEFFSINAQRNALAIAANCCQSITPDEFHFVADSLPLLTQRLTHQDKKSVESTCLCFARLVDNFQHEENLLQQVASKDLLTNVQQLLVVTPPILSSGMFIMVVRMFSLMCSNCPTLAVQLMKQNIAETLHFLLCGASNGSCQEQIDLVPRSPQELYELTSLICELMPCLPKEGIFAVDTMLKKGNAQNTDGAIWQWRDDRGLWHPYNRIDSRIIEAAHQVGEDEISLSTLGRVYTIDFNSMQQINEDTGTARAIQRKPNPLANSNTSGYSELKKDDARAQLMKEDPELAKSFIKTLFGVLYEVYSSSAGPAVRHKCLRAILRIIYFADAELLKDVLKNHAVSSHIASMLSSQDLKIVVGALQMAEILMQKLPDIFSVYFRREGVMHQVKHLAESESLLTSPPKACTNGSGSLGSTTPASSGTATAATNASADLGSPSLQHSRDDSLDLSPQGRLSDVLKRKRLPKRGPRRPKYSPPRDDDKVDNQAKSPTTTQSPKSSFLASLNPKTWGRLSAQSNSNNIEPARTAGVSGLARAASKDTISNNREKIKGWIKEQAHKFVERYFSSENMDGSNPALNVLQRLCAATEQLNLQVDGGAECLVEIRSIVSESDVSSFEIQHSGFVKQLLLYLTSKNEKDAVGREIRLKRFLHVFFSSPLPGEEPVGRVEPVGHAPLLALVHKMNNCLSQMEQFPVKVHDFPSGNGAGGSFSLNRGSQALKFFNTHQLKCQLQRHPDCANVKQWKGGPVKIDPLALVQAIERYLVVRGYGRVREDDEDSDDDGSDEEIDESLAAQFLNSGNVRHRLQFYIGEHLLPYNMTVYQAVRQFSVQAEDERESTDDESNPLGRAGIWTKTHTIWYKPVREDEESTKDCVGGKRGRAQTAPTKTSPRNAKKHDELWHDGVCPSVANPLEVYLIPTPPENITFEDPSLDVILLLRVLHAISRYWYYLYDNAMCKEIIPTSEFINSKLTAKANRQLQDPLVIMTGNIPTWLTELGKTCPFFFPFDTRQMLFYVTAFDRDRAMQRLLDTNPEINQSDSQDSRVAPRLDRKKRTVNREELLKQAESVMQDLGSSRAMLEIQYENEVGTGLGPTLEFYALVSQELQRADLCLWRGEEVTLSNPKGSQEGTKYIQNLQGLFALPFGRTAKPAHIAKVKMKFRFLGKLMAKAIMDFRLVDLPLGLPFYKWMLRQETSLTSHDLFDIDPVVARSVYHLEDIVRQKKRLEQDKSQTKESLQYALETLTMNGCSVEDLGLDFTLPGFPNIELKKGGKDIPVTIHNLEEYLRLVIFWALNEGVCRQFDSFRDGFESVFPLCHLQYFYPEELDQLLCGSKADTWDAKTLMECCRPDHGYTHDSRAVKFLFEILSSFDNEQQRLFLQFVTGSPRLPVGGFRSLNPPLTIVRKTFESTENPDDFLPSVMTCVNYLKLPDYSSIDIMRDKLLIAAREGQQSFHLS.

Over residues Met-1–Gly-10 the composition is skewed to polar residues. A disordered region spans residues Met-1–Glu-404. Ser-2 carries the post-translational modification N-acetylserine. A Phosphoserine modification is found at Ser-12. Positions Arg-18 to Asp-27 are enriched in polar residues. Basic and acidic residues predominate over residues Asp-48–Arg-70. A phosphoserine mark is found at Ser-77, Ser-85, and Ser-100. Positions Pro-78–Ser-88 are enriched in polar residues. The segment covering Glu-119–Lys-132 has biased composition (polar residues). 2 stretches are compositionally biased toward low complexity: residues Ser-154 to Thr-166 and Lys-177 to Thr-215. Lys-181 is subject to N6-acetyllysine. Positions Pro-280–Pro-290 are enriched in polar residues. Ser-310 and Ser-312 each carry phosphoserine. Positions Gln-326–Arg-338 are enriched in polar residues. A compositionally biased stretch (basic and acidic residues) spans Gly-346–Asp-358. The span at Glu-360–Ala-371 shows a compositional bias: polar residues. A compositionally biased stretch (low complexity) spans Gly-379–Glu-397. Residues Met-755–Lys-869 enclose the WWE domain. A disordered region spans residues Glu-970–Ser-1077. The residue at position 975 (Ser-975) is a Phosphoserine. The segment covering Gly-983–Ala-1006 has biased composition (low complexity). Phosphoserine is present on residues Ser-1024 and Ser-1030. Positions Lys-1034–Lys-1047 are enriched in basic residues. A Phosphoserine modification is found at Ser-1049. Positions Pro-1050 to Asn-1059 are enriched in basic and acidic residues. Residues Lys-1062–Ser-1073 show a composition bias toward low complexity. A phosphoserine mark is found at Ser-1063, Ser-1350, Ser-1355, Ser-1362, and Ser-1409. Thr-1410 is modified (phosphothreonine). Disordered stretches follow at residues Thr-1441 to Lys-1466 and Thr-1601 to Asp-1620. The residue at position 1458 (Lys-1458) is an N6-acetyllysine. Ser-1460 is modified (phosphoserine). The K-box stretch occupies residues Glu-1529–Pro-1603. Positions Pro-1918–Ser-2025 constitute an HECT domain. The active-site Glycyl thioester intermediate is Cys-1992.

Belongs to the UPL family. K-HECT subfamily. As to quaternary structure, interacts with MYC; leading to disrupt interaction with isoform p19ARF/ARF of CDKN2A. Interacts with TRADD; leading to disrupt interaction with isoform p19ARF/ARF of CDKN2A. Interacts with SMARCC1; leading to disrupt interaction with SMARCE1.

Its subcellular location is the nucleus. The protein localises to the nucleoplasm. The enzyme catalyses S-ubiquitinyl-[E2 ubiquitin-conjugating enzyme]-L-cysteine + [acceptor protein]-L-lysine = [E2 ubiquitin-conjugating enzyme]-L-cysteine + N(6)-ubiquitinyl-[acceptor protein]-L-lysine.. The protein operates within protein modification; protein ubiquitination. In terms of biological role, E3 ubiquitin-protein ligase involved in ubiquitin fusion degradation (UFD) pathway and regulation of DNA repair. Part of the ubiquitin fusion degradation (UFD) pathway, a process that mediates ubiquitination of protein at their N-terminus, regardless of the presence of lysine residues in target proteins. Acts as a key regulator of DNA damage response by acting as a suppressor of RNF168, an E3 ubiquitin-protein ligase that promotes accumulation of 'Lys-63'-linked histone H2A and H2AX at DNA damage sites, thereby acting as a guard against excessive spreading of ubiquitinated chromatin at damaged chromosomes. In normal cells, mediates ubiquitination and degradation of isoform p19ARF/ARF of CDKN2A, a lysine-less tumor suppressor required for p53/TP53 activation under oncogenic stress. In cancer cells, however, isoform p19ARF/ARF and TRIP12 are located in different cell compartments, preventing isoform p19ARF/ARF ubiquitination and degradation. Does not mediate ubiquitination of isoform p16-INK4a of CDKN2A. Also catalyzes ubiquitination of NAE1 and SMARCE1, leading to their degradation. Ubiquitination and degradation of target proteins is regulated by interaction with proteins such as MYC, TRADD or SMARCC1, which disrupt the interaction between TRIP12 and target proteins. Mediates ubiquitination of ASXL1: following binding to N(6)-methyladenosine methylated DNA, ASXL1 is ubiquitinated by TRIP12, leading to its degradation and subsequent inactivation of the PR-DUB complex. The chain is E3 ubiquitin-protein ligase TRIP12 (Trip12) from Mus musculus (Mouse).